An 804-amino-acid polypeptide reads, in one-letter code: MAAHRPGPLKQQNKAHKGGRHRGRGSAQRDGKGRLALKTLSKKVRKELSRVDQRHRASQLRKQKKEAVLAEKRQLGGKDGPPHQVLVVPLHSRISLPEAMQLLQDRDTGTVHLNELGNTQNFMLLCPRLKHRWFFTSARPGDLHVVLDMAKVADTILFLLDPLEGWDSTGDYCLSCLFAQGLPTYTLAVQGISGLPLKKQIDTRKKLSKAVEKRFPHDKLLLLDTQQEAGMLLRQLANQKQQHLAFRDRRAYLFAHAVDFVPSEENNLVGTLKISGYVRGQTLNVNRLLHIVGYGDFQMKQIDAPGDPFPLNPRGIKPQKDPDMAMEICATDAVDDMEEGLKVLMKADPGRQESLQAEVIPDPMEGEQTWPTEEELSEAKDFLKESSKVVKKVPKGTSSYQAEWILDGGSQSGGEGDEYEYDDMEHEDFMEEESQDESSEEEEEYETMTIGESVHDDLYDKKVDEEAEAKMLEKYKQERLEEMFPDEVDTPRDVAARIRFQKYRGLKSFRTSPWDPKENLPQDYARIFQFQNFTNTRKSIFKEVEEKEVEGAEVGWYVTLHVSEVPVSVVECFRQGTPLIAFSLLPHEQKMSVLNMVVRRDPGNTEPVKAKEELIFHCGFRRFRASPLFSQHTAADKHKLQRFLTADMALVATVYAPITFPPASVLLFKQKSNGMHSLIATGHLMSVDPDRMVIKRVVLSGHPFKIFTKMAVVRYMFFNREDVLWFKPVELRTKWGRRGHIKEPLGTHGHMKCSFDGKLKSQDTVLMNLYKRVFPKWTYDPYVPEPVPWLKSEISSTVPQGGME.

Positions 1–67 are disordered; it reads MAAHRPGPLK…SQLRKQKKEA (67 aa). Positions 13 to 24 are enriched in basic residues; that stretch reads NKAHKGGRHRGR. The span at 46 to 55 shows a compositional bias: basic and acidic residues; the sequence is KELSRVDQRH. The Bms1-type G domain maps to 81–242; that stretch reads PPHQVLVVPL…LRQLANQKQQ (162 aa).

It belongs to the TRAFAC class translation factor GTPase superfamily. Bms1-like GTPase family. TSR1 subfamily.

It localises to the nucleus. The protein localises to the nucleolus. Functionally, required during maturation of the 40S ribosomal subunit in the nucleolus. The polypeptide is Pre-rRNA-processing protein TSR1 homolog (TSR1) (Homo sapiens (Human)).